Consider the following 370-residue polypeptide: DNA replication and repair protein RecF (370 aa).

30–37 (GENAQGKT) is a binding site for ATP.

Belongs to the RecF family.

Its subcellular location is the cytoplasm. Functionally, the RecF protein is involved in DNA metabolism; it is required for DNA replication and normal SOS inducibility. RecF binds preferentially to single-stranded, linear DNA. It also seems to bind ATP. This Staphylococcus carnosus (strain TM300) protein is DNA replication and repair protein RecF.